Consider the following 110-residue polypeptide: Large ribosomal subunit protein uL22 (110 aa).

Over residues 84–95 (ARGTASKIRKPT) the composition is skewed to basic residues. A disordered region spans residues 84–110 (ARGTASKIRKPTSHVMVEVSKPEKKEA).

This sequence belongs to the universal ribosomal protein uL22 family. Part of the 50S ribosomal subunit.

Its function is as follows. This protein binds specifically to 23S rRNA; its binding is stimulated by other ribosomal proteins, e.g. L4, L17, and L20. It is important during the early stages of 50S assembly. It makes multiple contacts with different domains of the 23S rRNA in the assembled 50S subunit and ribosome. The globular domain of the protein is located near the polypeptide exit tunnel on the outside of the subunit, while an extended beta-hairpin is found that lines the wall of the exit tunnel in the center of the 70S ribosome. The polypeptide is Large ribosomal subunit protein uL22 (Campylobacter concisus (strain 13826)).